Reading from the N-terminus, the 294-residue chain is Melanocortin receptor 5 (294 aa).

Over 1-29 the chain is Extracellular; sequence FLDLQLNATEGNVSGPSVGNTSSPCEDMG. N-linked (GlcNAc...) asparagine glycosylation is found at Asn-7, Asn-12, and Asn-20. The chain crosses the membrane as a helical span at residues 30–53; it reads IEVEVFLTLGLISLLENILVIGAI. At 54–65 the chain is on the cytoplasmic side; that stretch reads ARNKNLHVPMYF. A helical transmembrane segment spans residues 66-89; the sequence is FVCSLAVADMLVSLSNSWETITIY. The Extracellular portion of the chain corresponds to 90 to 106; that stretch reads LIANKHLVLSDTSVRHL. The chain crosses the membrane as a helical span at residues 107-130; that stretch reads DNVFDSMICISLVASMCSLLAVAV. The Cytoplasmic portion of the chain corresponds to 131-147; it reads DRYVTIFYALRYQHLMT. Residues 148–171 form a helical membrane-spanning segment; it reads GRRCGAIIAGIWALCTGCGPVFIV. Residues 172–178 are Extracellular-facing; the sequence is YYESTYV. Residues 179 to 203 form a helical membrane-spanning segment; sequence VVCLVAMFLTMLLLMASLYAHMFLQ. Over 204–231 the chain is Cytoplasmic; sequence ARAHVRRIAALPGYRSARQRTSMKGAVT. Residues 232–257 traverse the membrane as a helical segment; sequence LAMLLGVFIVCWAPFFLHLILMISCP. Over 258-265 the chain is Extracellular; the sequence is QNLYCSCF. A helical membrane pass occupies residues 266 to 289; it reads MSHFNMYLILIMCNSVIDPLIYAF. At 290–294 the chain is on the cytoplasmic side; it reads RSQEK.

Belongs to the G-protein coupled receptor 1 family.

It is found in the cell membrane. Functionally, receptor for MSH (alpha, beta and gamma) and ACTH. The activity of this receptor is mediated by G proteins which activate adenylate cyclase. This receptor is a possible mediator of the immunomodulation properties of melanocortins. This is Melanocortin receptor 5 (MC5R) from Sus scrofa (Pig).